Here is a 1450-residue protein sequence, read N- to C-terminus: Auxilin-like protein 1 (1450 aa).

Disordered stretches follow at residues 117–142 (NEDKKRNRRKGGNSSDVPLCNEGKKS), 241–318 (STRD…AESS), 357–383 (DSKIENKGNTKVEGITEESRDNNSQIL), 459–480 (NSKQQEPENLAPAKPEPDTKQE), 512–541 (SQKDEKQFTEKENSTVTQMVQDEESDSQEM), 556–575 (EETPQQTESKSEMNIEEKSE), 908–946 (DRSETDSNNSRERFDQTQEQAEETMIDGSIDTDTSRSSF), 961–1046 (EQHR…ELEH), 1077–1168 (GAAT…ERKQ), 1192–1241 (AGKT…AERA), and 1254–1328 (AMEK…SDRA). A coiled-coil region spans residues 316 to 344 (ESSAALKKAIEEAQIRMNIAKQMMEKKKS). Positions 357–366 (DSKIENKGNT) are enriched in basic and acidic residues. Basic and acidic residues-rich tracts occupy residues 512–524 (SQKDEKQFTEKEN), 564–575 (SKSEMNIEEKSE), 908–923 (DRSETDSNNSRERFDQ), 1037–1046 (RNGDKKELEH), 1117–1131 (NMKENEGEESCRSSM), 1147–1168 (ETVEEHLKKIDETREKERERKQ), and 1192–1226 (AGKTAMEKAKAVAHRREVPRKSEKGSVEVNDKLSS). 2 coiled-coil regions span residues 1142-1184 (SQNK…RERA) and 1219-1257 (EVNDKLSSAEKASMQAKLRAERAAVERAITEVRERAMEK). Residues 1270–1299 (SYGGSKSFSSSGERRGSSSSGTENKSSGPS) show a composition bias toward low complexity. A compositionally biased stretch (basic and acidic residues) spans 1310–1328 (PIQRCKARSERHQRTSDRA). Residues 1327-1355 (RAAEALAEKKLRDLKTQKEQTERNRLAEA) adopt a coiled-coil conformation. Residues 1377–1450 (TLQYILGAES…AWNKFGADER (74 aa)) enclose the J domain.

This Arabidopsis thaliana (Mouse-ear cress) protein is Auxilin-like protein 1 (AUL1).